The sequence spans 108 residues: MMKGQLAGLMRQAQQMQENMKKAQDALAEIQVEGAAGGGLVKVTMTCRHDVKRVAIDASLLGEDKDMLEDLVAAAFNDALRKAEATSQEKMASVTAGMPLPPGMKLPF.

The disordered stretch occupies residues 87 to 108 (SQEKMASVTAGMPLPPGMKLPF). Residues 99–108 (PLPPGMKLPF) are compositionally biased toward pro residues.

It belongs to the YbaB/EbfC family. Homodimer.

It localises to the cytoplasm. Its subcellular location is the nucleoid. In terms of biological role, binds to DNA and alters its conformation. May be involved in regulation of gene expression, nucleoid organization and DNA protection. This Bordetella pertussis (strain Tohama I / ATCC BAA-589 / NCTC 13251) protein is Nucleoid-associated protein BP1550.